Reading from the N-terminus, the 258-residue chain is UPF0246 protein IL2146 (258 aa).

This sequence belongs to the UPF0246 family.

This is UPF0246 protein IL2146 from Idiomarina loihiensis (strain ATCC BAA-735 / DSM 15497 / L2-TR).